Here is a 346-residue protein sequence, read N- to C-terminus: Phosphoribosylformylglycinamidine cyclo-ligase (346 aa).

Belongs to the AIR synthase family.

It localises to the cytoplasm. The enzyme catalyses 2-formamido-N(1)-(5-O-phospho-beta-D-ribosyl)acetamidine + ATP = 5-amino-1-(5-phospho-beta-D-ribosyl)imidazole + ADP + phosphate + H(+). Its pathway is purine metabolism; IMP biosynthesis via de novo pathway; 5-amino-1-(5-phospho-D-ribosyl)imidazole from N(2)-formyl-N(1)-(5-phospho-D-ribosyl)glycinamide: step 2/2. In Colwellia psychrerythraea (strain 34H / ATCC BAA-681) (Vibrio psychroerythus), this protein is Phosphoribosylformylglycinamidine cyclo-ligase.